Here is a 523-residue protein sequence, read N- to C-terminus: GMP synthase [glutamine-hydrolyzing] (523 aa).

Residues K8–N205 form the Glutamine amidotransferase type-1 domain. The active-site Nucleophile is the C85. Catalysis depends on residues H179 and E181. Residues W206–R398 enclose the GMPS ATP-PPase domain. S233–S239 is a binding site for ATP.

Homodimer.

It catalyses the reaction XMP + L-glutamine + ATP + H2O = GMP + L-glutamate + AMP + diphosphate + 2 H(+). It participates in purine metabolism; GMP biosynthesis; GMP from XMP (L-Gln route): step 1/1. Its function is as follows. Catalyzes the synthesis of GMP from XMP. In Histophilus somni (strain 129Pt) (Haemophilus somnus), this protein is GMP synthase [glutamine-hydrolyzing].